The sequence spans 699 residues: Endogenous retrovirus group K member 19 Env polyprotein (699 aa).

The disordered stretch occupies residues 1–47 (MNPSEMQRKAPPRRRRHRNRAPLTHKMNKMVTSEEQMKLPSTKKAEP). The N-terminal stretch at 1–89 (MNPSEMQRKA…ALMIVSMVVS (89 aa)) is a signal peptide. Over residues 10–20 (APPRRRRHRNR) the composition is skewed to basic residues. Over 90 to 632 (LPMPAGAAAA…NLNPVTWVKT (543 aa)) the chain is Extracellular. Residues Asn100, Asn128, Asn153, Asn274, Asn355, Asn372, and Asn461 are each glycosylated (N-linked (GlcNAc...) asparagine). The segment at 466–486 (FIFTLIAVIMGLIAVTATAAV) is fusion peptide. N-linked (GlcNAc...) asparagine glycans are attached at residues Asn507, Asn554, Asn566, and Asn585. The chain crosses the membrane as a helical span at residues 633–653 (IGSTTIINLILILVCLFCLLL). The Cytoplasmic segment spans residues 654 to 699 (VCRCTQQLRRDSDHRERAMMTMAVLSKRKGGNVGKSKRDQIVTVSV).

Belongs to the beta type-B retroviral envelope protein family. HERV class-II K(HML-2) env subfamily. The surface (SU) and transmembrane (TM) proteins form a heterodimer. SU and TM are attached by noncovalent interactions or by a labile interchain disulfide bond. Specific enzymatic cleavages in vivo yield the mature SU and TM proteins.

It localises to the cell membrane. It is found in the virion. Functionally, retroviral envelope proteins mediate receptor recognition and membrane fusion during early infection. Endogenous envelope proteins may have kept, lost or modified their original function during evolution. This endogenous envelope protein has lost its original fusogenic properties. SU mediates receptor recognition. Its function is as follows. TM anchors the envelope heterodimer to the viral membrane through one transmembrane domain. The other hydrophobic domain, called fusion peptide, mediates fusion of the viral membrane with the target cell membrane. The polypeptide is Endogenous retrovirus group K member 19 Env polyprotein (ERVK-19) (Homo sapiens (Human)).